A 167-amino-acid chain; its full sequence is MPEQIDGNKLDLEERVVTINRVAKVVKGGRRFRFTALVVVGDKNGHVGFGTGKAQEVPDAIRKAVEDAKKNMVFVPTVDTTIPHTVVGHFGGGEILLKPASAGSGVTAGGPVRAVLELAGVADVSSKSLGSNTPINMVRATIDGIKQLKNAEDVAKLRGKTVEELLG.

Positions 12–75 (LEERVVTINR…EDAKKNMVFV (64 aa)) constitute an S5 DRBM domain.

Belongs to the universal ribosomal protein uS5 family. In terms of assembly, part of the 30S ribosomal subunit. Contacts proteins S4 and S8.

Functionally, with S4 and S12 plays an important role in translational accuracy. Located at the back of the 30S subunit body where it stabilizes the conformation of the head with respect to the body. In Listeria innocua serovar 6a (strain ATCC BAA-680 / CLIP 11262), this protein is Small ribosomal subunit protein uS5.